The following is a 339-amino-acid chain: NADH-quinone oxidoreductase subunit H (339 aa).

The next 9 helical transmembrane spans lie at 10–30, 50–70, 82–102, 115–135, 155–175, 187–207, 235–255, 275–295, and 311–331; these read FPLT…ILCV, PNVV…KLLF, ILFI…WAVI, VGVL…IIAG, ISYE…TGTL, LPWW…ISVL, MGFA…SAMT, IPGF…FLWI, and GWKV…SVLF.

The protein belongs to the complex I subunit 1 family. NDH-1 is composed of 14 different subunits. Subunits NuoA, H, J, K, L, M, N constitute the membrane sector of the complex.

The protein resides in the cell inner membrane. The catalysed reaction is a quinone + NADH + 5 H(+)(in) = a quinol + NAD(+) + 4 H(+)(out). Functionally, NDH-1 shuttles electrons from NADH, via FMN and iron-sulfur (Fe-S) centers, to quinones in the respiratory chain. The immediate electron acceptor for the enzyme in this species is believed to be ubiquinone. Couples the redox reaction to proton translocation (for every two electrons transferred, four hydrogen ions are translocated across the cytoplasmic membrane), and thus conserves the redox energy in a proton gradient. This subunit may bind ubiquinone. In Rickettsia typhi (strain ATCC VR-144 / Wilmington), this protein is NADH-quinone oxidoreductase subunit H.